The primary structure comprises 650 residues: DNA mismatch repair protein MutL (650 aa).

A disordered region spans residues 374 to 420 (SSLPDTQRSQRQPEKAASGQRSSVDAGLSQGSSAHRASQTGLGQSGN). Residues 392–420 (GQRSSVDAGLSQGSSAHRASQTGLGQSGN) show a composition bias toward polar residues.

It belongs to the DNA mismatch repair MutL/HexB family.

In terms of biological role, this protein is involved in the repair of mismatches in DNA. It is required for dam-dependent methyl-directed DNA mismatch repair. May act as a 'molecular matchmaker', a protein that promotes the formation of a stable complex between two or more DNA-binding proteins in an ATP-dependent manner without itself being part of a final effector complex. This is DNA mismatch repair protein MutL from Shewanella amazonensis (strain ATCC BAA-1098 / SB2B).